Reading from the N-terminus, the 257-residue chain is 3-dehydroquinate dehydratase (257 aa).

3-dehydroquinate-binding positions include 50–52 and R86; that span reads EWR. H147 acts as the Proton donor/acceptor in catalysis. The active-site Schiff-base intermediate with substrate is the K174. 3-dehydroquinate is bound by residues R216, S235, and Q239.

The protein belongs to the type-I 3-dehydroquinase family. In terms of assembly, homodimer.

It catalyses the reaction 3-dehydroquinate = 3-dehydroshikimate + H2O. Its pathway is metabolic intermediate biosynthesis; chorismate biosynthesis; chorismate from D-erythrose 4-phosphate and phosphoenolpyruvate: step 3/7. Functionally, involved in the third step of the chorismate pathway, which leads to the biosynthesis of aromatic amino acids. Catalyzes the cis-dehydration of 3-dehydroquinate (DHQ) and introduces the first double bond of the aromatic ring to yield 3-dehydroshikimate. This is 3-dehydroquinate dehydratase from Geobacillus kaustophilus (strain HTA426).